We begin with the raw amino-acid sequence, 125 residues long: Histone H2A, orphon (125 aa).

The span at 1–18 (MSGRGKGGKVKAKAKSRS) shows a compositional bias: basic residues. The interval 1–21 (MSGRGKGGKVKAKAKSRSSRA) is disordered. N-acetylserine is present on serine 2. Position 2 is a phosphoserine (serine 2). Lysine 119 is covalently cross-linked (Glycyl lysine isopeptide (Lys-Gly) (interchain with G-Cter in ubiquitin)).

It belongs to the histone H2A family. In terms of assembly, the nucleosome is a histone octamer containing two molecules each of H2A, H2B, H3 and H4 assembled in one H3-H4 heterotetramer and two H2A-H2B heterodimers. The octamer wraps approximately 147 bp of DNA. Monoubiquitination of Lys-119 gives a specific tag for epigenetic transcriptional repression. In terms of processing, phosphorylation on Ser-2 is enhanced during mitosis. Phosphorylation on Ser-2 directly represses transcription.

The protein resides in the nucleus. The protein localises to the chromosome. Functionally, core component of nucleosome. Nucleosomes wrap and compact DNA into chromatin, limiting DNA accessibility to the cellular machineries which require DNA as a template. Histones thereby play a central role in transcription regulation, DNA repair, DNA replication and chromosomal stability. DNA accessibility is regulated via a complex set of post-translational modifications of histones, also called histone code, and nucleosome remodeling. The polypeptide is Histone H2A, orphon (Chironomus thummi thummi (Midge)).